Reading from the N-terminus, the 881-residue chain is Phosphoenolpyruvate carboxylase (881 aa).

Residues H138 and K545 contribute to the active site.

This sequence belongs to the PEPCase type 1 family. It depends on Mg(2+) as a cofactor.

It catalyses the reaction oxaloacetate + phosphate = phosphoenolpyruvate + hydrogencarbonate. Functionally, forms oxaloacetate, a four-carbon dicarboxylic acid source for the tricarboxylic acid cycle. The protein is Phosphoenolpyruvate carboxylase of Shewanella oneidensis (strain ATCC 700550 / JCM 31522 / CIP 106686 / LMG 19005 / NCIMB 14063 / MR-1).